The primary structure comprises 214 residues: Protein-L-isoaspartate O-methyltransferase (214 aa).

The active site involves S63.

This sequence belongs to the methyltransferase superfamily. L-isoaspartyl/D-aspartyl protein methyltransferase family.

It localises to the cytoplasm. The enzyme catalyses [protein]-L-isoaspartate + S-adenosyl-L-methionine = [protein]-L-isoaspartate alpha-methyl ester + S-adenosyl-L-homocysteine. Catalyzes the methyl esterification of L-isoaspartyl residues in peptides and proteins that result from spontaneous decomposition of normal L-aspartyl and L-asparaginyl residues. It plays a role in the repair and/or degradation of damaged proteins. This Maridesulfovibrio salexigens (strain ATCC 14822 / DSM 2638 / NCIMB 8403 / VKM B-1763) (Desulfovibrio salexigens) protein is Protein-L-isoaspartate O-methyltransferase.